The sequence spans 208 residues: Thymidylate kinase (208 aa).

10 to 17 (GPEGSGKT) serves as a coordination point for ATP.

Belongs to the thymidylate kinase family.

It catalyses the reaction dTMP + ATP = dTDP + ADP. Functionally, phosphorylation of dTMP to form dTDP in both de novo and salvage pathways of dTTP synthesis. This Bacillus cereus (strain ATCC 10987 / NRS 248) protein is Thymidylate kinase.